The chain runs to 155 residues: MPKGTGKVIAQNKKAFHDYFIEETYEVGLVLQGTEIKSIRAGRVNLKDAFARIHNGEVWVHNMHINTYEQGNRFNHDPLRTRKLLLHKKEIDKLAGYAKETGYALVPVRIYLKNGFAKMALGLAKGKKQYDKRHDLKEKEAKREIARVFRDRQKM.

Belongs to the SmpB family.

It localises to the cytoplasm. Required for rescue of stalled ribosomes mediated by trans-translation. Binds to transfer-messenger RNA (tmRNA), required for stable association of tmRNA with ribosomes. tmRNA and SmpB together mimic tRNA shape, replacing the anticodon stem-loop with SmpB. tmRNA is encoded by the ssrA gene; the 2 termini fold to resemble tRNA(Ala) and it encodes a 'tag peptide', a short internal open reading frame. During trans-translation Ala-aminoacylated tmRNA acts like a tRNA, entering the A-site of stalled ribosomes, displacing the stalled mRNA. The ribosome then switches to translate the ORF on the tmRNA; the nascent peptide is terminated with the 'tag peptide' encoded by the tmRNA and targeted for degradation. The ribosome is freed to recommence translation, which seems to be the essential function of trans-translation. This is SsrA-binding protein from Bacillus mycoides (strain KBAB4) (Bacillus weihenstephanensis).